We begin with the raw amino-acid sequence, 585 residues long: Frizzled-5 (585 aa).

A signal peptide spans 1–26 (MARPDPSAPPSLLLLLLAQLVGRAAA). Over 27–238 (ASKAPVCQEI…PDERTFATFW (212 aa)) the chain is Extracellular. Residues 28–150 (SKAPVCQEIT…GDAEVLCMDY (123 aa)) enclose the FZ domain. 5 disulfides stabilise this stretch: C33–C94, C41–C87, C78–C116, C105–C147, and C109–C133. The N-linked (GlcNAc...) asparagine glycan is linked to N47. N151 carries N-linked (GlcNAc...) asparagine glycosylation. Residues 156–182 (TTASPKSFPAKPTLPGPPGAPSSGGEC) are disordered. The chain crosses the membrane as a helical span at residues 239–259 (IGLWSVLCFISTSTTVATFLI). At 260–270 (DMERFRYPERP) the chain is on the cytoplasmic side. Residues 271-291 (IIFLSACYLCVSLGFLVRLVV) form a helical membrane-spanning segment. Residues 292 to 315 (GHASVACSREHSHIHYETTGPALC) are Extracellular-facing. A helical transmembrane segment spans residues 316–336 (TVVFLLVYFFGMASSIWWVIL). At 337–358 (SLTWFLAAGMKWGNEAIAGYAQ) the chain is on the cytoplasmic side. Residues 359 to 379 (YFHLAAWLIPSVKSITALALS) form a helical membrane-spanning segment. Over 380–402 (SVDGDPVAGICYVGNQNLNSLRG) the chain is Extracellular. Residues 403–423 (FVLGPLVLYLLVGTLFLLAGF) traverse the membrane as a helical segment. Residues 424-449 (VSLFRIRSVIKQGGTKTDKLEKLMIR) lie on the Cytoplasmic side of the membrane. Residues 450–470 (IGIFTLLYTVPASIVVACYLY) traverse the membrane as a helical segment. Residues 471–500 (EQHYRESWEAALTCACPGPDAGQPRAKPEY) are Extracellular-facing. Residues 501 to 521 (WVLMLKYFMCLVVGITSGVWI) traverse the membrane as a helical segment. Residues 522–585 (WSGKTLESWR…YHKQVSLSHV (64 aa)) are Cytoplasmic-facing. The short motif at 582-584 (LSH) is the PDZ-binding element.

It belongs to the G-protein coupled receptor Fz/Smo family. Binding of unsaturated fatty acid molecules (via FZ domain) promotes homodimerization (via FZ domain). Interacts with WNT2B. Interacts with WNT7A. Interacts with GOPC. In terms of processing, ubiquitinated by RNF43 and ZNRF3, leading to its degradation by the proteasome. Detected in hippocampus (at protein level). Expressed in eye, kidney, lung, chondrocytes, epithelial cells of the small intestine and gobelet cells of the colon.

The protein resides in the cell membrane. It localises to the golgi apparatus membrane. Its subcellular location is the synapse. The protein localises to the perikaryon. It is found in the cell projection. The protein resides in the dendrite. It localises to the axon. Receptor for Wnt proteins. Functions in the canonical Wnt/beta-catenin signaling pathway. In vitro activates WNT2, WNT10B, WNT5A, but not WNT2B or WNT4 signaling. In neurons, activation by WNT7A promotes formation of synapses. May be involved in transduction and intercellular transmission of polarity information during tissue morphogenesis and/or in differentiated tissues. Plays a role in yolk sac angiogenesis and in placental vascularization. Plays a role in ocular development. The polypeptide is Frizzled-5 (Fzd5) (Mus musculus (Mouse)).